The chain runs to 589 residues: Probable translation initiation factor IF-2 (589 aa).

In terms of domain architecture, tr-type G spans 14–231; the sequence is LRQPIVCVLG…GLAQRFLESE (218 aa). The segment at 23–30 is G1; sequence GHVDHGKT. A GTP-binding site is contributed by 23–30; it reads GHVDHGKT. Positions 48-52 are G2; that stretch reads GITQR. The G3 stretch occupies residues 84 to 87; sequence DTPG. GTP contacts are provided by residues 84-88 and 138-141; these read DTPGH and NKID. A G4 region spans residues 138 to 141; the sequence is NKID. The tract at residues 206-208 is G5; that stretch reads SAK.

The protein belongs to the TRAFAC class translation factor GTPase superfamily. Classic translation factor GTPase family. IF-2 subfamily.

Its function is as follows. Function in general translation initiation by promoting the binding of the formylmethionine-tRNA to ribosomes. Seems to function along with eIF-2. The protein is Probable translation initiation factor IF-2 of Thermoplasma volcanium (strain ATCC 51530 / DSM 4299 / JCM 9571 / NBRC 15438 / GSS1).